The following is a 281-amino-acid chain: Proteasome subunit beta 2 (281 aa).

A propeptide spans 1-53 (removed in mature form; by autocatalysis); it reads MEANTRSTGRLPAAFLTPGSSSFMDFLSEHQPEILPGNRQLPPTQGVIEAPHG. Residue T54 is the Nucleophile of the active site.

Belongs to the peptidase T1B family. The 20S proteasome core is composed of 14 alpha and 14 beta subunits that assemble into four stacked heptameric rings, resulting in a barrel-shaped structure. The two inner rings, each composed of seven catalytic beta subunits, are sandwiched by two outer rings, each composed of seven alpha subunits. The catalytic chamber with the active sites is on the inside of the barrel. Has a gated structure, the ends of the cylinder being occluded by the N-termini of the alpha-subunits. Is capped by the proteasome-associated ATPase, ARC.

The protein localises to the cytoplasm. It catalyses the reaction Cleavage of peptide bonds with very broad specificity.. The protein operates within protein degradation; proteasomal Pup-dependent pathway. With respect to regulation, the formation of the proteasomal ATPase ARC-20S proteasome complex, likely via the docking of the C-termini of ARC into the intersubunit pockets in the alpha-rings, may trigger opening of the gate for substrate entry. Interconversion between the open-gate and close-gate conformations leads to a dynamic regulation of the 20S proteasome proteolysis activity. Functionally, component of the proteasome core, a large protease complex with broad specificity involved in protein degradation. The protein is Proteasome subunit beta 2 of Streptomyces avermitilis (strain ATCC 31267 / DSM 46492 / JCM 5070 / NBRC 14893 / NCIMB 12804 / NRRL 8165 / MA-4680).